The sequence spans 485 residues: Ribulose bisphosphate carboxylase large chain (485 aa).

The substrate site is built by Asn124 and Thr174. Lys176 functions as the Proton acceptor in the catalytic mechanism. Lys178 provides a ligand contact to substrate. The Mg(2+) site is built by Lys202, Asp204, and Glu205. Lys202 is subject to N6-carboxylysine. The active-site Proton acceptor is His294. Substrate contacts are provided by Arg295, His327, and Ser379.

The protein belongs to the RuBisCO large chain family. Type I subfamily. Heterohexadecamer of 8 large chains and 8 small chains. It depends on Mg(2+) as a cofactor.

The enzyme catalyses 2 (2R)-3-phosphoglycerate + 2 H(+) = D-ribulose 1,5-bisphosphate + CO2 + H2O. It catalyses the reaction D-ribulose 1,5-bisphosphate + O2 = 2-phosphoglycolate + (2R)-3-phosphoglycerate + 2 H(+). RuBisCO catalyzes two reactions: the carboxylation of D-ribulose 1,5-bisphosphate, the primary event in carbon dioxide fixation, as well as the oxidative fragmentation of the pentose substrate. Both reactions occur simultaneously and in competition at the same active site. This is Ribulose bisphosphate carboxylase large chain from Rhodopseudomonas palustris (strain HaA2).